The chain runs to 412 residues: Transforming growth factor beta-3 proprotein (412 aa).

The first 23 residues, 1-23 (MKMHLQRALVVLALLNFATVSLS), serve as a signal peptide directing secretion. N-linked (GlcNAc...) asparagine glycans are attached at residues Asn74, Asn135, and Asn142. The Cell attachment site motif lies at 261 to 263 (RGD). Gln293 carries the N5-methylglutamine modification. Cystine bridges form between Cys307–Cys316, Cys315–Cys378, Cys344–Cys409, and Cys348–Cys411.

The protein belongs to the TGF-beta family. As to quaternary structure, interacts with ASPN. Latency-associated peptide: Homodimer; disulfide-linked. Latency-associated peptide: Interacts with Transforming growth factor beta-3 (TGF-beta-3) chain; interaction is non-covalent and maintains (TGF-beta-3) in a latent state. Latency-associated peptide: Interacts with LRRC32/GARP; leading to regulate activation of TGF-beta-3 and promote epithelial fusion during palate development. Latency-associated peptide: Interacts (via cell attachment site) with integrins, leading to release of the active TGF-beta-3. Transforming growth factor beta-3: Homodimer; disulfide-linked. Transforming growth factor beta-3: Interacts with TGF-beta receptors (TGFBR1 and TGFBR2), leading to signal transduction. Post-translationally, transforming growth factor beta-3 proprotein: The precursor proprotein is cleaved in the Golgi apparatus to form Transforming growth factor beta-3 (TGF-beta-3) and Latency-associated peptide (LAP) chains, which remain non-covalently linked, rendering TGF-beta-3 inactive. In terms of processing, methylated at Gln-293 by N6AMT1.

The protein localises to the secreted. It localises to the extracellular space. It is found in the extracellular matrix. Its function is as follows. Transforming growth factor beta-3 proprotein: Precursor of the Latency-associated peptide (LAP) and Transforming growth factor beta-3 (TGF-beta-3) chains, which constitute the regulatory and active subunit of TGF-beta-3, respectively. In terms of biological role, required to maintain the Transforming growth factor beta-3 (TGF-beta-3) chain in a latent state during storage in extracellular matrix. Associates non-covalently with TGF-beta-3 and regulates its activation via interaction with 'milieu molecules', such as LTBP1 and LRRC32/GARP, that control activation of TGF-beta-3. Interaction with integrins results in distortion of the Latency-associated peptide chain and subsequent release of the active TGF-beta-3. Transforming growth factor beta-3: Multifunctional protein that regulates embryogenesis and cell differentiation and is required in various processes such as secondary palate development. Activation into mature form follows different steps: following cleavage of the proprotein in the Golgi apparatus, Latency-associated peptide (LAP) and Transforming growth factor beta-3 (TGF-beta-3) chains remain non-covalently linked rendering TGF-beta-3 inactive during storage in extracellular matrix. At the same time, LAP chain interacts with 'milieu molecules', such as LTBP1 and LRRC32/GARP that control activation of TGF-beta-3 and maintain it in a latent state during storage in extracellular milieus. TGF-beta-3 is released from LAP by integrins: integrin-binding results in distortion of the LAP chain and subsequent release of the active TGF-beta-3. Once activated following release of LAP, TGF-beta-3 acts by binding to TGF-beta receptors (TGFBR1 and TGFBR2), which transduce signal. In Homo sapiens (Human), this protein is Transforming growth factor beta-3 proprotein (TGFB3).